We begin with the raw amino-acid sequence, 146 residues long: Mitochondrial pyruvate carrier 3 (146 aa).

The transit peptide at 1 to 20 directs the protein to the mitochondrion; that stretch reads MSASAFNFAFRRFWNSETGP. 3 consecutive transmembrane segments (helical) span residues 23–39, 55–71, and 78–94; these read VHFW…FAGL, LSLL…SFVI, and LASV…YHLT.

This sequence belongs to the mitochondrial pyruvate carrier (MPC) (TC 2.A.105) family. The functional 150 kDa pyruvate import complex is a heteromer of MPC1 and either MPC2 or MPC3.

It is found in the mitochondrion. The protein localises to the mitochondrion inner membrane. In terms of biological role, mediates the uptake of pyruvate into mitochondria. This chain is Mitochondrial pyruvate carrier 3, found in Saccharomyces cerevisiae (strain ATCC 204508 / S288c) (Baker's yeast).